The following is a 63-amino-acid chain: Sarcotoxin-1A (63 aa).

The signal sequence occupies residues 1 to 23 (MNFQNIFIFVALILAVFAGQSQA). R62 bears the Arginine amide mark.

The protein belongs to the cecropin family.

The protein localises to the secreted. In terms of biological role, sarcotoxins, which are potent bactericidal proteins, are produced in response to injury. They are cytotoxic to both Gram-positive and Gram-negative bacteria. This Sarcophaga peregrina (Flesh fly) protein is Sarcotoxin-1A.